Consider the following 365-residue polypeptide: MTGVAAPERIARAVRADIRALTAYPVADAAGCIKLDAMECPYELPAEVRDDIARAARETPLNRYPAAANPALQAQVRQAFEVPAQAGLLFGNGSDELIHLIIQACCEPGDTVLSPWPSFVYFDMAARLSHARFVGVPLTAGLELDLPATLAAIEAHQPKVVFLALPNNPTGGLWPDAAVRAILDAAPGLVVLDEAYQPFAGHTWMPRIMDEPNAVVMRTVSKIGLAGLRFGYLAGHPAWIAEFDKVRPPYNMDVLSQAVLAAVLRHKPVLDAQADRLHADRQPLADGLAALPGVTVFPSAGNFVLARFCGKLDGNAVHLALKTRKILVRNFSNAHPLLADCLRISVGTPTENAAVLSALQDILSA.

Position 222 is an N6-(pyridoxal phosphate)lysine (Lys-222).

Belongs to the class-II pyridoxal-phosphate-dependent aminotransferase family. Histidinol-phosphate aminotransferase subfamily. Homodimer. Pyridoxal 5'-phosphate is required as a cofactor.

It catalyses the reaction L-histidinol phosphate + 2-oxoglutarate = 3-(imidazol-4-yl)-2-oxopropyl phosphate + L-glutamate. Its pathway is amino-acid biosynthesis; L-histidine biosynthesis; L-histidine from 5-phospho-alpha-D-ribose 1-diphosphate: step 7/9. This is Histidinol-phosphate aminotransferase 2 (hisC2) from Bordetella parapertussis (strain 12822 / ATCC BAA-587 / NCTC 13253).